An 832-amino-acid polypeptide reads, in one-letter code: FAST kinase domain-containing protein 1, mitochondrial (832 aa).

Residues 765-825 (VAIEFLDSKA…KDAWMDYLRK (61 aa)) form the RAP domain.

This sequence belongs to the FAST kinase family.

It localises to the mitochondrion. Functionally, may regulate the stability of some mitochondrial mRNA species. This Xenopus laevis (African clawed frog) protein is FAST kinase domain-containing protein 1, mitochondrial (fastkd1).